A 330-amino-acid chain; its full sequence is Aspartate--ammonia ligase (330 aa).

The protein belongs to the class-II aminoacyl-tRNA synthetase family. AsnA subfamily.

Its subcellular location is the cytoplasm. It carries out the reaction L-aspartate + NH4(+) + ATP = L-asparagine + AMP + diphosphate + H(+). It functions in the pathway amino-acid biosynthesis; L-asparagine biosynthesis; L-asparagine from L-aspartate (ammonia route): step 1/1. The chain is Aspartate--ammonia ligase from Haemophilus influenzae (strain PittEE).